A 179-amino-acid polypeptide reads, in one-letter code: Large ribosomal subunit protein uL5 (179 aa).

The protein belongs to the universal ribosomal protein uL5 family. As to quaternary structure, part of the 50S ribosomal subunit; part of the 5S rRNA/L5/L18/L25 subcomplex. Contacts the 5S rRNA and the P site tRNA. Forms a bridge to the 30S subunit in the 70S ribosome.

In terms of biological role, this is one of the proteins that bind and probably mediate the attachment of the 5S RNA into the large ribosomal subunit, where it forms part of the central protuberance. In the 70S ribosome it contacts protein S13 of the 30S subunit (bridge B1b), connecting the 2 subunits; this bridge is implicated in subunit movement. Contacts the P site tRNA; the 5S rRNA and some of its associated proteins might help stabilize positioning of ribosome-bound tRNAs. This Halothermothrix orenii (strain H 168 / OCM 544 / DSM 9562) protein is Large ribosomal subunit protein uL5.